The chain runs to 255 residues: Ribonuclease HII (255 aa).

One can recognise an RNase H type-2 domain in the interval 72–255 (AIICGIDEVG…KSFEPIKSLL (184 aa)). 3 residues coordinate a divalent metal cation: Asp78, Glu79, and Asp170.

This sequence belongs to the RNase HII family. It depends on Mn(2+) as a cofactor. The cofactor is Mg(2+).

Its subcellular location is the cytoplasm. The enzyme catalyses Endonucleolytic cleavage to 5'-phosphomonoester.. Its function is as follows. Endonuclease that specifically degrades the RNA of RNA-DNA hybrids. This chain is Ribonuclease HII, found in Staphylococcus aureus (strain MRSA252).